The following is a 153-amino-acid chain: Protein C (153 aa).

Positions 16 to 42 are disordered; it reads SSETLTLLSNQEPLSMQDPPLVRSSTR. The segment covering 18-29 has biased composition (polar residues); that stretch reads ETLTLLSNQEPL.

The polypeptide is Protein C (P/V/C) (Tupaia paramyxovirus (TPMV)).